The sequence spans 142 residues: Holo-[acyl-carrier-protein] synthase (142 aa).

Residues aspartate 9 and glutamate 63 each coordinate Mg(2+).

The protein belongs to the P-Pant transferase superfamily. AcpS family. Mg(2+) is required as a cofactor.

The protein localises to the cytoplasm. It catalyses the reaction apo-[ACP] + CoA = holo-[ACP] + adenosine 3',5'-bisphosphate + H(+). Its function is as follows. Transfers the 4'-phosphopantetheine moiety from coenzyme A to a Ser of acyl-carrier-protein. In Burkholderia lata (strain ATCC 17760 / DSM 23089 / LMG 22485 / NCIMB 9086 / R18194 / 383), this protein is Holo-[acyl-carrier-protein] synthase.